Consider the following 448-residue polypeptide: Extracellular serine protease (448 aa).

The N-terminal stretch at 1 to 20 (MKLSHLSLAIISAITLAACG) is a signal peptide. A disordered region spans residues 87 to 109 (KELENQASDDEVDPTKTGVVGNL).

Belongs to the peptidase S17 family. Requires a divalent metal cation as cofactor.

In terms of biological role, this enzyme is a chymotrypsin-like serine protease. Degrades a variety of substrates present in the skin and hoof of the sheep, including elastin, keratin, fibrinogen and collagen. It seems to play an important role in the pathogenesis of sheep footrot. This Dichelobacter nodosus (Bacteroides nodosus) protein is Extracellular serine protease (prvA).